The chain runs to 423 residues: MFEMRSANPIENFVVSKIHIRGLDFAASVENEITHMEIYESLNGLVSGMFMFKDSIGVVDTIRMTGFEAIDVEFASYVGEQANRVYQKSFRATGISRMPARTGGFETVLVRFTNNLLTLNDYVKRPYVFKKTSISNIIKAILDNLGDEKPEYEIETSLYQRDFVTKIGKPYDIIKSIVDHASTDVNNSCKFMFYEDRDSVKFASLGSIRDKEYEYIIRKGADTGDGKWTSGNTNTITALRVVVKEQSNMHEISSGLFGSRTYSHSLIRKKLTTKDVRRNDYIAQVGILNDRAHMYTNELEFASEVPETEQPLNSIQLLPNDGFYEHDNKHPLGSIHGVSLMEETYLKAKQIIVEIPGNTNITVGDVVFLDYHAVTGENHSSLDASGRWIVHELKHRVEPNSFITTLELSSDSSVNIAIAGSKK.

As to quaternary structure, homotrimer. Interacts with gp5 trimer.

Its subcellular location is the virion. Baseplate protein that is part of the baseplate hub. Involved in the tail assembly. The sequence is that of Probable baseplate hub protein gp334 from Vibrio parahaemolyticus (KVP40).